The chain runs to 177 residues: UPF0316 protein STH2077 (177 aa).

Helical transmembrane passes span 9–29 and 41–61; these read AALD…VNTV and LASA…GLVV.

It belongs to the UPF0316 family.

Its subcellular location is the cell membrane. This is UPF0316 protein STH2077 from Symbiobacterium thermophilum (strain DSM 24528 / JCM 14929 / IAM 14863 / T).